The sequence spans 124 residues: uncharacterized protein (124 aa).

The protein localises to the plastid. The protein resides in the chloroplast. This is an uncharacterized protein from Chlamydomonas reinhardtii (Chlamydomonas smithii).